The sequence spans 474 residues: Aspartyl/glutamyl-tRNA(Asn/Gln) amidotransferase subunit B (474 aa).

It belongs to the GatB/GatE family. GatB subfamily. As to quaternary structure, heterotrimer of A, B and C subunits.

The catalysed reaction is L-glutamyl-tRNA(Gln) + L-glutamine + ATP + H2O = L-glutaminyl-tRNA(Gln) + L-glutamate + ADP + phosphate + H(+). It catalyses the reaction L-aspartyl-tRNA(Asn) + L-glutamine + ATP + H2O = L-asparaginyl-tRNA(Asn) + L-glutamate + ADP + phosphate + 2 H(+). Its function is as follows. Allows the formation of correctly charged Asn-tRNA(Asn) or Gln-tRNA(Gln) through the transamidation of misacylated Asp-tRNA(Asn) or Glu-tRNA(Gln) in organisms which lack either or both of asparaginyl-tRNA or glutaminyl-tRNA synthetases. The reaction takes place in the presence of glutamine and ATP through an activated phospho-Asp-tRNA(Asn) or phospho-Glu-tRNA(Gln). The sequence is that of Aspartyl/glutamyl-tRNA(Asn/Gln) amidotransferase subunit B from Wolbachia sp. subsp. Brugia malayi (strain TRS).